A 350-amino-acid chain; its full sequence is Dauer larva development regulatory growth factor daf-7 (350 aa).

A signal peptide spans 1–21 (MFMASSLPVFIFLLSLPHGLT). The propeptide occupies 22–234 (FNCTNSGVCI…TRPKGSRKRR (213 aa)). A glycan (N-linked (GlcNAc...) asparagine) is linked at asparagine 23. 4 disulfides stabilise this stretch: cysteine 241-cysteine 251, cysteine 250-cysteine 315, cysteine 278-cysteine 347, and cysteine 282-cysteine 349.

It belongs to the TGF-beta family. As to expression, expressed in the chemosensory neurons, including in the ASJ neurons in males. Expressed in the ASI neurons.

The protein resides in the secreted. In terms of biological role, under harsh environmental conditions, larvae enter a developmentally arrested state known as dauer; TGF-beta-like daf-7 acts to inhibit dauer larva formation and promote growth. May be a ligand to cell surface receptor daf-4. May act as a negative regulator of dauer larva development by transducing chemosensory information from ASI neurons. Involved in sensitivity to CO2 levels. Involved in mate searching behavior of males, acting in concert with the neuropeptide pdf-1. In AWC neurons, acts to promote expression of srsx-3, a member of the GPCR family. The protein is Dauer larva development regulatory growth factor daf-7 of Caenorhabditis elegans.